The following is a 210-amino-acid chain: MSDAKELKQVLTGPIVNNNPIALQILGVCSALAVTSKLETALVMALALTAVTAFSNLFISLIRNHIPSSVRIIVQMTIIASLVIVVDQLLQAYAYQISKQLSVFVGLIITNCIVMGRAEAYAMKTPPMMSFMDGIGNGLGYGVILLAVGFVRELFGNGSLFGVQILHKISEGGWYQPNGMLLLPPSAFFLIGILIWIIRTYKPEQVEAKG.

A run of 6 helical transmembrane segments spans residues 14–34 (PIVNNNPIALQILGVCSALAV), 42–62 (LVMALALTAVTAFSNLFISLI), 72–92 (IIVQMTIIASLVIVVDQLLQA), 103–123 (VFVGLIITNCIVMGRAEAYAM), 131–151 (FMDGIGNGLGYGVILLAVGFV), and 178–198 (NGMLLLPPSAFFLIGILIWII).

It belongs to the NqrDE/RnfAE family. In terms of assembly, composed of six subunits; NqrA, NqrB, NqrC, NqrD, NqrE and NqrF.

It localises to the cell inner membrane. The enzyme catalyses a ubiquinone + n Na(+)(in) + NADH + H(+) = a ubiquinol + n Na(+)(out) + NAD(+). In terms of biological role, NQR complex catalyzes the reduction of ubiquinone-1 to ubiquinol by two successive reactions, coupled with the transport of Na(+) ions from the cytoplasm to the periplasm. NqrA to NqrE are probably involved in the second step, the conversion of ubisemiquinone to ubiquinol. This chain is Na(+)-translocating NADH-quinone reductase subunit D, found in Shewanella putrefaciens (strain CN-32 / ATCC BAA-453).